A 200-amino-acid chain; its full sequence is Putative pseudouridine methyltransferase (200 aa).

S-adenosyl-L-methionine contacts are provided by M133 and C187.

Belongs to the methyltransferase superfamily. TrmY family.

Its subcellular location is the cytoplasm. The chain is Putative pseudouridine methyltransferase from Alcanivorax borkumensis (strain ATCC 700651 / DSM 11573 / NCIMB 13689 / SK2).